We begin with the raw amino-acid sequence, 346 residues long: Homeobox protein ceh-22 (346 aa).

Disordered stretches follow at residues 1–68 (MFNV…QSAL) and 135–190 (LPDQ…RKKR). Low complexity predominate over residues 9–24 (AATPSIASVSSVASPS). A compositionally biased stretch (polar residues) spans 25 to 44 (EQHGLSTSVGVGVNDTTSRT). The span at 49-67 (AASSASSASAAPQQQSQSA) shows a compositional bias: low complexity. Residues 147 to 156 (LDNSNTSNGN) are compositionally biased toward polar residues. Over residues 166 to 182 (EDEDEILEDEENDEEDD) the composition is skewed to acidic residues. The homeobox DNA-binding region spans 189 to 248 (KRKRRVLFTKAQTYELERRFRSQKYLSAPEREALAMQIRLTPTQVKIWFQNHRYKTKKSH).

The protein belongs to the NK-2 homeobox family.

The protein localises to the nucleus. Functionally, involved in combinatorial activation of gene expression in pharyngeal muscle. Specifically binds a site necessary for activity of the B subelement of myo-2 enhancer. Its function is as follows. Regulates distal tip cell fate. The chain is Homeobox protein ceh-22 (ceh-22) from Caenorhabditis elegans.